The sequence spans 361 residues: Inactive 2'-5'-oligoadenylate synthase 1D (361 aa).

Belongs to the 2-5A synthase family. In terms of assembly, interacts with OAS1A, the interaction inhibits OAS1A catalytic activity. Expressed specifically in oocytes (at protein level). Expressed at highest level in ovary with lesser amounts in intestine, brain, thymus lung, kidney, liver and uterus.

It localises to the cytoplasm. Functionally, does not have 2'-5'-oligoadenylate synthetase activity, but can bind double-stranded RNA. May play a role in the control of female fertility, possibly by binding to and inhibiting OAS1A. The protein is Inactive 2'-5'-oligoadenylate synthase 1D of Mus musculus (Mouse).